The chain runs to 383 residues: Erythronate-4-phosphate dehydrogenase (383 aa).

The substrate site is built by Ser-45 and Thr-67. NAD(+) is bound at residue Asp-147. Arg-208 is an active-site residue. Asp-232 is an NAD(+) binding site. The active site involves Glu-237. Residue His-254 is the Proton donor of the active site. NAD(+) is bound at residue Gly-257. Tyr-258 is a substrate binding site.

Belongs to the D-isomer specific 2-hydroxyacid dehydrogenase family. PdxB subfamily. Homodimer.

The protein localises to the cytoplasm. It carries out the reaction 4-phospho-D-erythronate + NAD(+) = (R)-3-hydroxy-2-oxo-4-phosphooxybutanoate + NADH + H(+). Its pathway is cofactor biosynthesis; pyridoxine 5'-phosphate biosynthesis; pyridoxine 5'-phosphate from D-erythrose 4-phosphate: step 2/5. Catalyzes the oxidation of erythronate-4-phosphate to 3-hydroxy-2-oxo-4-phosphonooxybutanoate. The chain is Erythronate-4-phosphate dehydrogenase from Psychromonas ingrahamii (strain DSM 17664 / CCUG 51855 / 37).